The chain runs to 307 residues: Actin maturation protease (307 aa).

Positions 1–34 are disordered; that stretch reads MSLENDAAAPPPPPLPPPPPPQPPSLARSESSKK. Residues 9-24 are compositionally biased toward pro residues; the sequence is APPPPPLPPPPPPQPP. The tract at residues 80-200 is peptidase C39-like; it reads SLIQDGPQCG…WAVASGILLG (121 aa). Cys-88 is an active-site residue.

The protein belongs to the ACTMAP family.

Its subcellular location is the cytoplasm. It catalyses the reaction N-terminal N(alpha)-acetyl-L-methionyl-L-aspartyl-[protein] + H2O = N-terminal L-aspartyl-[protein] + N-acetyl-L-methionine. The enzyme catalyses N-terminal N(alpha)-acetyl-L-methionyl-L-glutamyl-[protein] + H2O = N-terminal L-glutamyl-[protein] + N-acetyl-L-methionine. The catalysed reaction is N-terminal N(alpha)-acetyl-L-cysteinyl-L-aspartyl-[protein] + H2O = N-terminal L-aspartyl-[protein] + N-acetyl-L-cysteine. It carries out the reaction N-terminal N(alpha)-acetyl-L-cysteinyl-L-glutamyl-[protein] + H2O = N-terminal L-glutamyl-[protein] + N-acetyl-L-cysteine. In terms of biological role, actin maturation protease that specifically mediates the cleavage of immature acetylated N-terminal actin, thereby contributing to actin maturation. Cleaves N-terminal acetylated methionine of immature cytoplasmic actin after translation. Cleaves N-terminal acetylated cysteine of muscle actin after canonical removal of N-terminal methionine. In Danio rerio (Zebrafish), this protein is Actin maturation protease.